The primary structure comprises 481 residues: ATP synthase subunit beta (481 aa).

An ATP-binding site is contributed by 160 to 167 (GGAGVGKT).

Belongs to the ATPase alpha/beta chains family. F-type ATPases have 2 components, CF(1) - the catalytic core - and CF(0) - the membrane proton channel. CF(1) has five subunits: alpha(3), beta(3), gamma(1), delta(1), epsilon(1). CF(0) has three main subunits: a(1), b(2) and c(9-12). The alpha and beta chains form an alternating ring which encloses part of the gamma chain. CF(1) is attached to CF(0) by a central stalk formed by the gamma and epsilon chains, while a peripheral stalk is formed by the delta and b chains.

It is found in the cell inner membrane. It carries out the reaction ATP + H2O + 4 H(+)(in) = ADP + phosphate + 5 H(+)(out). Its function is as follows. Produces ATP from ADP in the presence of a proton gradient across the membrane. The catalytic sites are hosted primarily by the beta subunits. The polypeptide is ATP synthase subunit beta (Myxococcus xanthus (strain DK1622)).